Consider the following 311-residue polypeptide: tRNA-cytidine(32) 2-sulfurtransferase (311 aa).

The PP-loop motif motif lies at Ser47 to Ser52. Cys122, Cys125, and Cys213 together coordinate [4Fe-4S] cluster.

Belongs to the TtcA family. Homodimer. It depends on Mg(2+) as a cofactor. [4Fe-4S] cluster serves as cofactor.

It localises to the cytoplasm. The catalysed reaction is cytidine(32) in tRNA + S-sulfanyl-L-cysteinyl-[cysteine desulfurase] + AH2 + ATP = 2-thiocytidine(32) in tRNA + L-cysteinyl-[cysteine desulfurase] + A + AMP + diphosphate + H(+). The protein operates within tRNA modification. Functionally, catalyzes the ATP-dependent 2-thiolation of cytidine in position 32 of tRNA, to form 2-thiocytidine (s(2)C32). The sulfur atoms are provided by the cysteine/cysteine desulfurase (IscS) system. The protein is tRNA-cytidine(32) 2-sulfurtransferase of Escherichia coli O1:K1 / APEC.